The primary structure comprises 161 residues: Cytochrome c-type biogenesis protein CcmE (161 aa).

Residues 1–8 (MNPRRKKR) lie on the Cytoplasmic side of the membrane. Residues 9–29 (LGLILALFVGISATVGLMLYA) form a helical; Signal-anchor for type II membrane protein membrane-spanning segment. Topologically, residues 30 to 161 (LNQNMDLFYT…TEQQKQGTGQ (132 aa)) are periplasmic. Heme is bound by residues His129 and Tyr133. Residues 142–161 (MKKTHEPLQYTEQQKQGTGQ) are disordered. Polar residues predominate over residues 151 to 161 (YTEQQKQGTGQ).

This sequence belongs to the CcmE/CycJ family.

It localises to the cell inner membrane. Functionally, heme chaperone required for the biogenesis of c-type cytochromes. Transiently binds heme delivered by CcmC and transfers the heme to apo-cytochromes in a process facilitated by CcmF and CcmH. This Aliivibrio fischeri (strain ATCC 700601 / ES114) (Vibrio fischeri) protein is Cytochrome c-type biogenesis protein CcmE.